The chain runs to 320 residues: Adenosine receptor A3 (320 aa).

The Extracellular segment spans residues 1–16; it reads MKANNTTTSALWLQIT. Asn-4 and Asn-5 each carry an N-linked (GlcNAc...) asparagine glycan. Residues 17–39 traverse the membrane as a helical segment; the sequence is YITMEAAIGLCAVVGNMLVIWVV. Residues 40-50 lie on the Cytoplasmic side of the membrane; sequence KLNRTLRTTTF. Residues 51–74 form a helical membrane-spanning segment; the sequence is YFIVSLALADIAVGVLVIPLAIAV. The Extracellular segment spans residues 75 to 86; it reads SLEVQMHFYACL. A disulfide bond links Cys-85 and Cys-168. A helical transmembrane segment spans residues 87–108; the sequence is FMSCVLLVFTHASIMSLLAIAV. The Cytoplasmic portion of the chain corresponds to 109 to 128; the sequence is DRYLRVKLTVRYRTVTTQRR. The helical transmembrane segment at 129–150 threads the bilayer; the sequence is IWLFLGLCWLVSFLVGLTPMFG. Residues 151–179 are Extracellular-facing; it reads WNRKVTLELSQNSSTLSCHFRSVVGLDYM. A helical membrane pass occupies residues 180–200; that stretch reads VFFSFITWILIPLVVMCIIYL. At 201–233 the chain is on the cytoplasmic side; it reads DIFYIIRNKLSQNLTGFRETRAFYGREFKTAKS. The helical transmembrane segment at 234–257 threads the bilayer; that stretch reads LFLVLFLFALCWLPLSIINFVSYF. Over 258–263 the chain is Extracellular; that stretch reads NVKIPE. Residues 264–286 form a helical membrane-spanning segment; sequence IAMCLGILLSHANSMMNPIVYAC. Residues 287 to 320 are Cytoplasmic-facing; sequence KIKKFKETYFVILRACRLCQTSDSLDSNLEQTTE. The S-palmitoyl cysteine moiety is linked to residue Cys-305. Phosphothreonine occurs at positions 307, 318, and 319.

Belongs to the G-protein coupled receptor 1 family. Phosphorylation on Thr-318 and Thr-319 may be crucial for rapid desensitization. Phosphorylation on Thr-318 may be necessary for phosphorylation on Thr-319 to occur. Testis, particularly in spermatocytes and spermatids but not in spermatogonia. Low levels in the brain.

The protein resides in the cell membrane. In terms of biological role, receptor for adenosine. The activity of this receptor is mediated by G proteins which inhibits adenylyl cyclase. May play a role during reproduction. The chain is Adenosine receptor A3 (Adora3) from Rattus norvegicus (Rat).